Here is a 625-residue protein sequence, read N- to C-terminus: tRNA uridine 5-carboxymethylaminomethyl modification enzyme MnmG (625 aa).

FAD-binding positions include 10–15 (GGGHAG), V122, and S177. 271 to 285 (GPRYCPSIEDKVNRF) lines the NAD(+) pocket. Q368 provides a ligand contact to FAD.

Belongs to the MnmG family. As to quaternary structure, homodimer. Heterotetramer of two MnmE and two MnmG subunits. Requires FAD as cofactor.

It is found in the cytoplasm. Functionally, NAD-binding protein involved in the addition of a carboxymethylaminomethyl (cmnm) group at the wobble position (U34) of certain tRNAs, forming tRNA-cmnm(5)s(2)U34. The protein is tRNA uridine 5-carboxymethylaminomethyl modification enzyme MnmG of Wolinella succinogenes (strain ATCC 29543 / DSM 1740 / CCUG 13145 / JCM 31913 / LMG 7466 / NCTC 11488 / FDC 602W) (Vibrio succinogenes).